Here is a 123-residue protein sequence, read N- to C-terminus: Large ribosomal subunit protein uL14c (123 aa).

This sequence belongs to the universal ribosomal protein uL14 family. As to quaternary structure, part of the 50S ribosomal subunit.

Its subcellular location is the plastid. It is found in the chloroplast. In terms of biological role, binds to 23S rRNA. The protein is Large ribosomal subunit protein uL14c of Sorghum bicolor (Sorghum).